Consider the following 128-residue polypeptide: Cholecystokinin B (128 aa).

A signal peptide spans 1–20 (MCSGVCICLLLAMLSASSKA). Residues 21 to 108 (HQATGSLGED…FDQSHRINDR (88 aa)) constitute a propeptide that is removed on maturation. The segment at 47–67 (YARASSAGQKKSFQRTDGDQR) is disordered. Tyr-110 is subject to Sulfotyrosine. Phe-116 is subject to Phenylalanine amide. Residues 120–128 (SAEEYEYSS) constitute a propeptide that is removed on maturation.

This sequence belongs to the gastrin/cholecystokinin family. Post-translationally, the precursor is cleaved by proteases to produce a number of active cholecystokinins. In terms of tissue distribution, brain and gastrointestinal tract.

Its subcellular location is the secreted. This is Cholecystokinin B (cck-b) from Xenopus laevis (African clawed frog).